Here is a 259-residue protein sequence, read N- to C-terminus: Heat-labile enterotoxin IIA, A chain (259 aa).

A signal peptide spans 1 to 18 (MIKHVLLFFVFISFSVSA). Residue 23-37 (RADSRTPDEIRRAGG) participates in NAD(+) binding. Glu-128 is a catalytic residue. The cysteines at positions 203 and 215 are disulfide-linked.

The protein belongs to the enterotoxin A family. Heterohexamer of one A chain and of five B chains.

Functionally, the biological activity of the toxin is produced by the A chain, which activates intracellular adenyl cyclase. The polypeptide is Heat-labile enterotoxin IIA, A chain (Escherichia coli).